We begin with the raw amino-acid sequence, 130 residues long: Fumarate reductase subunit C (130 aa).

The next 3 helical transmembrane spans lie at 30–50 (EGTSIPAVWFSVLLIYGVFAL), 60–80 (FVSFLQNPLVLFLNILTLFAA), and 110–130 (IKALWVVTVVASAIILAVALL).

Belongs to the FrdC family. As to quaternary structure, part of an enzyme complex containing four subunits: a flavoprotein (FrdA), an iron-sulfur protein (FrdB), and two hydrophobic anchor proteins (FrdC and FrdD).

It is found in the cell inner membrane. Two distinct, membrane-bound, FAD-containing enzymes are responsible for the catalysis of fumarate and succinate interconversion; fumarate reductase is used in anaerobic growth, and succinate dehydrogenase is used in aerobic growth. Anchors the catalytic components of the fumarate reductase complex to the cell inner membrane, binds quinones. This is Fumarate reductase subunit C from Yersinia pseudotuberculosis serotype O:1b (strain IP 31758).